Consider the following 441-residue polypeptide: MKMKILLIGGGGREHAIAEGIKESKHNPILYALMAKKNPGIAALCEDFLLEKETEVEKIVEYAKARNIEMAFVGPEAPLAAGVADALWEAGIPVVGPKKACAVIEFDKAWARNFMKKYGIEGCPAYEVFTEEAPAHAFIEKLGDVAVKPSGLTGGKGVKVMGDQLPDLKAAKDYTSELLEKGPVVIEERFIGEEFTLQAFVDGKNLAFFPAVQDHKRAYEGDLGPNTGGMGSYTDAGEILPFMLAGDIEQAKKIMQHTVTALHEETGTGYQGVLYGQFILTASGPKVVEFNARFGDPEAMNVIPLIETDFTEIMSAVVKSTLDSLPVKFSRKATVCKYAVPAGYPDNPEKDSEVLVGDVGEASVYYASVYEKEGKIYTTGSRAVAVVGRAETIDAAEKIAQNALENIQGKLFFRKDIGTASLIQKRIDHMKELRGGLSQKQ.

The region spanning 112–319 is the ATP-grasp domain; it reads RNFMKKYGIE…FTEIMSAVVK (208 aa). Residue 139-196 coordinates ATP; that stretch reads IEKLGDVAVKPSGLTGGKGVKVMGDQLPDLKAAKDYTSELLEKGPVVIEERFIGEEFT. Mg(2+)-binding residues include glutamine 277, glutamate 289, and asparagine 291. Mn(2+)-binding residues include glutamine 277, glutamate 289, and asparagine 291.

The protein belongs to the GARS family. Requires Mg(2+) as cofactor. It depends on Mn(2+) as a cofactor.

The enzyme catalyses 5-phospho-beta-D-ribosylamine + glycine + ATP = N(1)-(5-phospho-beta-D-ribosyl)glycinamide + ADP + phosphate + H(+). It participates in purine metabolism; IMP biosynthesis via de novo pathway; N(1)-(5-phospho-D-ribosyl)glycinamide from 5-phospho-alpha-D-ribose 1-diphosphate: step 2/2. The protein is Phosphoribosylamine--glycine ligase of Methanosarcina acetivorans (strain ATCC 35395 / DSM 2834 / JCM 12185 / C2A).